The sequence spans 503 residues: uncharacterized protein (503 aa).

2 stretches are compositionally biased toward basic and acidic residues: residues 1-23 and 203-215; these read MAHEGPRQVRDRGMTRSKAEKVR and PLEKLGDQSRSDQ. 2 disordered regions span residues 1–29 and 149–227; these read MAHEGPRQVRDRGMTRSKAEKVRPPTVPV and ETFQ…SNSS. Ser239 and Ser243 each carry phosphoserine. Disordered regions lie at residues 346-370 and 450-475; these read LDPARLPRPDMARSPSPKLWPGAKW and LLSSSEPQRNDREGSASPPIHTGAPK. A compositionally biased stretch (basic and acidic residues) spans 347–356; the sequence is DPARLPRPDM.

This is an uncharacterized protein from Bos taurus (Bovine).